A 348-amino-acid polypeptide reads, in one-letter code: MDNITWMASHTGWSDFILMGLFRQSKHPMANITWMANHTGWSDFILLGLFRQSKHPALLCVVIFVVFLMALSGNAVLILLIHCDAHLHTPMYFFISQLSLMDMAYISVTVPKMLLDQVMGVNKISAPECGMQMFFYVTLAGSEFFLLATMAYDRYVAICHPLRYPVLMNHRVCLFLSSGCWFLGSVDGFTFTPITMTFPFRGSREIHHFFCEVPAVLNLSCSDTSLYEIFMYLCCVLMLLIPVVIISSSYLLILLTIHGMNSAEGRKKAFATCSSHLTVVILFYGAAIYTYMLPSSYHTPEKDMMVSVFYTILTPVVNPLIYSLRNKDVMGALKKMLTVEPAFQKAME.

The Extracellular portion of the chain corresponds to 1 to 57 (MDNITWMASHTGWSDFILMGLFRQSKHPMANITWMANHTGWSDFILLGLFRQSKHPA). N-linked (GlcNAc...) asparagine glycans are attached at residues Asn-31 and Asn-37. A helical transmembrane segment spans residues 58 to 81 (LLCVVIFVVFLMALSGNAVLILLI). Residues 82-89 (HCDAHLHT) lie on the Cytoplasmic side of the membrane. A helical transmembrane segment spans residues 90–111 (PMYFFISQLSLMDMAYISVTVP). Residues 112–132 (KMLLDQVMGVNKISAPECGMQ) lie on the Extracellular side of the membrane. A disulfide bond links Cys-129 and Cys-221. The helical transmembrane segment at 133–152 (MFFYVTLAGSEFFLLATMAY) threads the bilayer. The Cytoplasmic portion of the chain corresponds to 153-171 (DRYVAICHPLRYPVLMNHR). The chain crosses the membrane as a helical span at residues 172-190 (VCLFLSSGCWFLGSVDGFT). The Extracellular segment spans residues 191 to 227 (FTPITMTFPFRGSREIHHFFCEVPAVLNLSCSDTSLY). N-linked (GlcNAc...) asparagine glycosylation occurs at Asn-218. A helical transmembrane segment spans residues 228–251 (EIFMYLCCVLMLLIPVVIISSSYL). Residues 252-268 (LILLTIHGMNSAEGRKK) lie on the Cytoplasmic side of the membrane. A helical transmembrane segment spans residues 269-291 (AFATCSSHLTVVILFYGAAIYTY). The Extracellular portion of the chain corresponds to 292–304 (MLPSSYHTPEKDM). Residues 305-324 (MVSVFYTILTPVVNPLIYSL) traverse the membrane as a helical segment. The Cytoplasmic segment spans residues 325 to 348 (RNKDVMGALKKMLTVEPAFQKAME).

The protein belongs to the G-protein coupled receptor 1 family.

It localises to the cell membrane. Its function is as follows. Odorant receptor. The sequence is that of Olfactory receptor 2T4 (OR2T4) from Homo sapiens (Human).